Here is a 258-residue protein sequence, read N- to C-terminus: Small ribosomal subunit protein uS2 (258 aa).

The segment at 226–258 (AQNKDVEPVADKDEKPEAAPVDEAETATETTGE) is disordered. The segment covering 229–242 (KDVEPVADKDEKPE) has biased composition (basic and acidic residues). A compositionally biased stretch (acidic residues) spans 245–258 (PVDEAETATETTGE).

This sequence belongs to the universal ribosomal protein uS2 family.

The chain is Small ribosomal subunit protein uS2 from Solidesulfovibrio magneticus (strain ATCC 700980 / DSM 13731 / RS-1) (Desulfovibrio magneticus).